The following is a 256-amino-acid chain: Na(+)-translocating NADH-quinone reductase subunit C (256 aa).

Residues 12 to 32 form a helical membrane-spanning segment; the sequence is LGVVIGLSLVCSIIVSTAAVG. Threonine 224 bears the FMN phosphoryl threonine mark.

It belongs to the NqrC family. Composed of six subunits; NqrA, NqrB, NqrC, NqrD, NqrE and NqrF. It depends on FMN as a cofactor.

It is found in the cell inner membrane. The catalysed reaction is a ubiquinone + n Na(+)(in) + NADH + H(+) = a ubiquinol + n Na(+)(out) + NAD(+). This reaction is tightly coupled to the Na(+) pumping activity and specifically requires Na(+) for activity. Inhibited by korormicin and 2-N-heptyl-4-hydroxyquinoline N-oxide (HQNO). NQR complex catalyzes the reduction of ubiquinone-1 to ubiquinol by two successive reactions, coupled with the transport of Na(+) ions from the cytoplasm to the periplasm. NqrA to NqrE are probably involved in the second step, the conversion of ubisemiquinone to ubiquinol. The chain is Na(+)-translocating NADH-quinone reductase subunit C from Vibrio alginolyticus.